Consider the following 136-residue polypeptide: Histone H3 (136 aa).

Positions 1 to 43 (MARTKQTARKNVGGKAPRKHIGQKSARKTASTTAGMKKPHRYR) are disordered. N6-methylated lysine is present on K10. N6-acetyllysine occurs at positions 15 and 24. Over residues 16–27 (APRKHIGQKSAR) the composition is skewed to basic residues. N6-methylated lysine occurs at positions 28 and 37.

It belongs to the histone H3 family. As to quaternary structure, the nucleosome is a histone octamer containing two molecules each of H2A, H2B, H3 and H4 assembled in one H3-H4 heterotetramer and two H2A-H2B heterodimers. The octamer wraps approximately 147 bp of DNA.

It localises to the nucleus. Its subcellular location is the chromosome. In terms of biological role, core component of nucleosome. Nucleosomes wrap and compact DNA into chromatin, limiting DNA accessibility to the cellular machineries which require DNA as a template. Histones thereby play a central role in transcription regulation, DNA repair, DNA replication and chromosomal stability. DNA accessibility is regulated via a complex set of post-translational modifications of histones, also called histone code, and nucleosome remodeling. The protein is Histone H3 of Euplotes crassus.